The following is a 332-amino-acid chain: Phosphate acyltransferase (332 aa).

This sequence belongs to the PlsX family. As to quaternary structure, homodimer. Probably interacts with PlsY.

It is found in the cytoplasm. It catalyses the reaction a fatty acyl-[ACP] + phosphate = an acyl phosphate + holo-[ACP]. It functions in the pathway lipid metabolism; phospholipid metabolism. Catalyzes the reversible formation of acyl-phosphate (acyl-PO(4)) from acyl-[acyl-carrier-protein] (acyl-ACP). This enzyme utilizes acyl-ACP as fatty acyl donor, but not acyl-CoA. This is Phosphate acyltransferase from Streptococcus sanguinis (strain SK36).